The primary structure comprises 306 residues: MMKKKPKCQIARTKPSVENVIPYNQFKKTQPRFNGNFSALNNEEYIILFGGGRDLILGSLTPCSSSHLSNQANPQDTSEYGTDLFILNSCIIIWFNGLGYGLEIPYSSVLYHASRRLPDGREGLQLEILLTLERDEVLDMLYQSLAPQACEFDGEEAHAFTVRSVELTIRPKYSIYDRHYNNEIETLFTFENFGVNRGDDLVNNCNEALAVCMDLHGEDVQDQDQEQYQDPSMAFEGAQDLNATYSGLGDTLHGPPVYQNDGLADDLDGDLVMDNVVSRGGPEASMSMEFYANQNLAGRKNSRDNE.

The protein belongs to the LOT5 family.

It is found in the cytoplasm. Its subcellular location is the nucleus. In Saccharomyces cerevisiae (strain ATCC 204508 / S288c) (Baker's yeast), this protein is Protein LOT5 (LOT5).